A 90-amino-acid polypeptide reads, in one-letter code: Large ribosomal subunit protein bL31B-1 (90 aa).

This sequence belongs to the bacterial ribosomal protein bL31 family. Type B subfamily. Part of the 50S ribosomal subunit.

The chain is Large ribosomal subunit protein bL31B-1 from Streptomyces coelicolor (strain ATCC BAA-471 / A3(2) / M145).